Here is a 481-residue protein sequence, read N- to C-terminus: Beta-1,3-glucan-binding protein (481 aa).

The signal sequence occupies residues 1-18 (RCARVCAVLFLFIQISYG). Residues 20-120 (YQVPQVTVQA…LSFTVSALED (101 aa)) enclose the CBM39 domain. A glycan (N-linked (GlcNAc...) asparagine) is linked at asparagine 110. Residues 124 to 481 (TGTGTDPVPT…LVDYVKVVAL (358 aa)) form the GH16 domain.

Belongs to the insect beta-1,3-glucan binding protein family.

The protein resides in the secreted. Involved in the recognition of invading microorganisms. Binds specifically to beta-1,3-glucan and activates the phenoloxidase cascade. This is Beta-1,3-glucan-binding protein from Hyphantria cunea (Fall webworm moth).